Consider the following 604-residue polypeptide: MTDVPVSRIRNFSIIAHIDHGKSTLADRMLQMTGTVEDRKMKEQFLDNLDLERERGITIKLQAARMNYTAQDGQHYVLNLIDTPGHVDFSYEVSRSLAACEGALLVVDASQGVEAQTLANVYLALENNLEIIPVLNKIDLPGAEPERVAQEIEEIVGLDCSGIIKASAKEGIGVNEILESIVHLVPPPDDTTNKPLRALIFDSYYDSYRGVVVYFRVMDGTVKKGDRVLLMASGKEYEIDELGVLSPHQIQVDELHAGEVGYFAAAIKTVEDARVGDTITLAPKPADEPLPGYKEAKPMVFCGLFPTDSDQYEDLRDALHKLKLNDAALNFEPETSTAMGFGFRCGFLGLLHMEIVQERLEREYDLDLITTAPSVVYRVTTTEEEVIEVDNPSQLPPPQKRIKIEEPYVHMEMITPETYVGALMELCQNRRGEFKDMRYFTQTRTALVYELPLAEIVTDFFDQLKSRTRGYASMEYHLIGYRENALVKLDIMVNGDGVDALAMIVHRDKAYNVGRALTEKLKELIPRHQFKVPIQAAIGSKVIASEHIPALRKDVLAKCYGGDITRKKKLLEKQAKGKKRMKSIGTVDVPQEAFMAVLRLNNES.

Residues 7 to 189 (SRIRNFSIIA…SIVHLVPPPD (183 aa)) enclose the tr-type G domain. Residues 19-24 (DHGKST) and 136-139 (NKID) contribute to the GTP site.

Belongs to the TRAFAC class translation factor GTPase superfamily. Classic translation factor GTPase family. LepA subfamily.

The protein localises to the cell inner membrane. The catalysed reaction is GTP + H2O = GDP + phosphate + H(+). In terms of biological role, required for accurate and efficient protein synthesis under certain stress conditions. May act as a fidelity factor of the translation reaction, by catalyzing a one-codon backward translocation of tRNAs on improperly translocated ribosomes. Back-translocation proceeds from a post-translocation (POST) complex to a pre-translocation (PRE) complex, thus giving elongation factor G a second chance to translocate the tRNAs correctly. Binds to ribosomes in a GTP-dependent manner. The polypeptide is Elongation factor 4 (Gloeothece citriformis (strain PCC 7424) (Cyanothece sp. (strain PCC 7424))).